A 48-amino-acid polypeptide reads, in one-letter code: uncharacterized protein (48 aa).

This is an uncharacterized protein from Escherichia coli (Bacteriophage HK022).